Consider the following 532-residue polypeptide: Probable 1,4-beta-D-glucan cellobiohydrolase B (532 aa).

A signal peptide spans 1 to 26 (MLASTFSYRMYKTALILAALLGSGQA). The tract at residues 27 to 461 (QQVGTSQAEV…SNIKVGPIGS (435 aa)) is catalytic. Glu-238 acts as the Nucleophile in catalysis. The active-site Proton donor is the Glu-243. A glycan (N-linked (GlcNAc...) asparagine) is linked at Asn-296. Positions 462 to 495 (TFNSGGSNPGGGTTTTTTTQPTTTTTTAGNPGGT) are disordered. A thr-rich linker region spans residues 462-496 (TFNSGGSNPGGGTTTTTTTQPTTTTTTAGNPGGTG). Residues 475–490 (TTTTTTQPTTTTTTAG) show a composition bias toward low complexity. In terms of domain architecture, CBM1 spans 496 to 532 (GVAQHYGQCGGIGWTGPTTCASPYTCQKLNDYYSQCL). Disulfide bonds link Cys-504/Cys-521 and Cys-515/Cys-531.

This sequence belongs to the glycosyl hydrolase 7 (cellulase C) family.

It is found in the secreted. The catalysed reaction is Hydrolysis of (1-&gt;4)-beta-D-glucosidic linkages in cellulose and cellotetraose, releasing cellobiose from the non-reducing ends of the chains.. In terms of biological role, the biological conversion of cellulose to glucose generally requires three types of hydrolytic enzymes: (1) Endoglucanases which cut internal beta-1,4-glucosidic bonds; (2) Exocellobiohydrolases that cut the disaccharide cellobiose from the non-reducing end of the cellulose polymer chain; (3) Beta-1,4-glucosidases which hydrolyze the cellobiose and other short cello-oligosaccharides to glucose. In Aspergillus fumigatus (strain CBS 144.89 / FGSC A1163 / CEA10) (Neosartorya fumigata), this protein is Probable 1,4-beta-D-glucan cellobiohydrolase B (cbhB).